Reading from the N-terminus, the 777-residue chain is C6 finger domain transcription factor adaR (777 aa).

Residues 1 to 20 form a disordered region; sequence MEQRSSPARSLPPRKTTTTP. Residues 24–50 constitute a DNA-binding region (zn(2)-C6 fungal-type); it reads CELCRKRKVKCDKLTPCTNCAASGTVC. Disordered regions lie at residues 61–85, 111–144, 182–213, 419–440, 468–496, and 655–699; these read GRHATRPRRVSSPPPTSAPGETDRI, NSHSHTRTPSATSREQSVQLSDTSTFQTAPNPNT, SSLAGGQEGPIPSSDSAKSEPPNDDGIQVLGL, PQHINDSDFDPTTAAHSDPNRE, RKVDGGIPTPTSSTSGTSTSRSRTCDPSW, and LPPS…PTGS. Residues 475 to 489 show a composition bias toward low complexity; it reads PTPTSSTSGTSTSRS. Residues 668 to 677 show a composition bias toward pro residues; the sequence is ATPPTFPGVP.

It localises to the nucleus. Transcription factor that specifically regulates the expression of the ada gene cluster involved in the biosynthesis of the linear tetracyclic TAN-1612 neuropeptide Y receptor antagonist. This is C6 finger domain transcription factor adaR from Aspergillus niger (strain ATCC MYA-4892 / CBS 513.88 / FGSC A1513).